A 141-amino-acid chain; its full sequence is Metallothiol transferase FosB (141 aa).

One can recognise a VOC domain in the interval 5–120; it reads SINHLLFSVS…DGHKFEFHTG (116 aa). Residues histidine 8, histidine 67, and glutamate 116 each coordinate Mg(2+). Glutamate 116 acts as the Proton donor/acceptor in catalysis.

This sequence belongs to the fosfomycin resistance protein family. FosB subfamily. As to quaternary structure, homodimer. Mg(2+) is required as a cofactor.

It localises to the cytoplasm. Metallothiol transferase which confers resistance to fosfomycin by catalyzing the addition of a thiol cofactor to fosfomycin. L-cysteine is probably the physiological thiol donor. The protein is Metallothiol transferase FosB of Lysinibacillus sphaericus (strain C3-41).